The following is a 1755-amino-acid chain: Periplakin (1755 aa).

Basic residues predominate over residues 1 to 11 (MHSLFRKRNKG). The tract at residues 1–20 (MHSLFRKRNKGKYSPTVQTR) is disordered. Phosphoserine is present on serine 14. Coiled coils occupy residues 16 to 125 (TVQT…KQMY) and 182 to 387 (LAKD…QQVV). Spectrin repeat units follow at residues 214–315 (QDYM…SHLK), 321–483 (HQFH…HALQ), and 503–610 (RQLL…EKVD). The 57-residue stretch at 397-453 (LKPIPVEALCDFESDQGLISRGYSYTLQKNNGESWELTDSTGKKLAAPAVCFIIPPT) folds into the SH3 domain. Serine 463 carries the phosphoserine modification. Coiled coils occupy residues 611-819 (VANR…RNSH) and 883-1644 (LSSG…SVAV). Residues serine 885, serine 947, serine 1583, and serine 1656 each carry the phosphoserine modification. Positions 1556-1755 (ELDFLREENH…ELAVLVSGQK (200 aa)) are interacts with BFSP2 and VIM. Plectin repeat units lie at residues 1650–1684 (ENHLRRSIVVIDPDTGRELSPEEAHRAGLIDWKMF) and 1699–1734 (VKGPNGESSVIHDRKSGKKFSIEDALQSGRLTAAQY).

This sequence belongs to the plakin or cytolinker family. In terms of assembly, homodimer or a heterodimer with EVPL. Found in a complex composed of PPL (via C-terminal linker domain), BFSP1 and BFSP2 in the retinal lens. Within the complex interacts (via C-terminal linker domain) with BFSP2. Interacts with VIM. Binds to the PH domain of AKT1. Interacts with FCGR1A. May interact with PPHLN1. Expressed in the retinal lens (at protein level).

Its subcellular location is the cell junction. It localises to the desmosome. The protein localises to the cytoplasm. It is found in the cytoskeleton. The protein resides in the cell membrane. Functionally, component of the cornified envelope of keratinocytes. May link the cornified envelope to desmosomes and intermediate filaments. May act as a localization signal in PKB/AKT-mediated signaling. This Mus musculus (Mouse) protein is Periplakin (Ppl).